The primary structure comprises 262 residues: Putative protein-methionine-sulfoxide reductase subunit YedZ1 (262 aa).

It belongs to the MsrP family.

In terms of biological role, part of the YedY1-YedZ1 system that may repair oxidized proteins containing methionine sulfoxide residues (Met-O). The chain is Putative protein-methionine-sulfoxide reductase subunit YedZ1 from Azospira oryzae (strain ATCC BAA-33 / DSM 13638 / PS) (Dechlorosoma suillum).